The sequence spans 414 residues: Secernin-1 (414 aa).

Ala2 carries the post-translational modification N-acetylalanine. Residue Cys9 is part of the active site.

It belongs to the peptidase C69 family. Secernin subfamily.

The protein resides in the cytoplasm. Functionally, regulates exocytosis in mast cells. Increases both the extent of secretion and the sensitivity of mast cells to stimulation with calcium. The polypeptide is Secernin-1 (SCRN1) (Bos taurus (Bovine)).